The sequence spans 411 residues: Prophage integrase IntR (411 aa).

A Core-binding (CB) domain is found at 81–176; the sequence is KTFGELCDIW…LLCSLLRFAY (96 aa). Residues 197–404 enclose the Tyr recombinase domain; sequence IKPDPLSKTE…IDDMNDEQIA (208 aa). Active-site residues include Arg-231, Lys-266, Arg-358, and His-381. The active-site O-(3'-phospho-DNA)-tyrosine intermediate is the Tyr-391.

This sequence belongs to the 'phage' integrase family.

In terms of biological role, integrase is necessary for integration of the phage into the host genome by site-specific recombination. In conjunction with excisionase, integrase is also necessary for excision of the prophage from the host genome. This Escherichia coli (strain K12) protein is Prophage integrase IntR (intR).